The following is a 235-amino-acid chain: Phosphoribosylaminoimidazole-succinocarboxamide synthase (235 aa).

Belongs to the SAICAR synthetase family.

The enzyme catalyses 5-amino-1-(5-phospho-D-ribosyl)imidazole-4-carboxylate + L-aspartate + ATP = (2S)-2-[5-amino-1-(5-phospho-beta-D-ribosyl)imidazole-4-carboxamido]succinate + ADP + phosphate + 2 H(+). It participates in purine metabolism; IMP biosynthesis via de novo pathway; 5-amino-1-(5-phospho-D-ribosyl)imidazole-4-carboxamide from 5-amino-1-(5-phospho-D-ribosyl)imidazole-4-carboxylate: step 1/2. The protein is Phosphoribosylaminoimidazole-succinocarboxamide synthase of Thermoanaerobacter pseudethanolicus (strain ATCC 33223 / 39E) (Clostridium thermohydrosulfuricum).